A 103-amino-acid polypeptide reads, in one-letter code: Conantokin R1-A (103 aa).

Positions 1–21 (MQLYTYLYLLVPLVTFHLILG) are cleaved as a signal peptide. The propeptide occupies 22 to 79 (TGTLDHGGALTERRSTDATALKPEPVLQKSAARSTDDNGKDRLTQMKRILKKRGNNPR). The interval 34–83 (RRSTDATALKPEPVLQKSAARSTDDNGKDRLTQMKRILKKRGNNPRADEE) is disordered. Basic and acidic residues predominate over residues 55–65 (STDDNGKDRLT). A 4-carboxyglutamate mark is found at glutamate 82, glutamate 83, and glutamate 89.

The protein belongs to the conotoxin B superfamily. Ca(2+) is required as a cofactor. The cofactor is Mg(2+). As to expression, expressed by the venom duct.

The protein resides in the secreted. Conantokins inhibit N-methyl-D-aspartate (NMDA) receptors. This toxin has the highest potency for the NR2B/GRIN2B subunit (IC(50)=0.11 uM), followed by NR2D/GRIN2D (IC(50)=0.48 uM), NR2A/GRIN2A (IC(50)=2.1 uM), and NR2C/GRIN2C (IC(50)=6.1 uM) subunits when tested on rat receptors. The chain is Conantokin R1-A from Conus rolani (Cone snail).